A 495-amino-acid polypeptide reads, in one-letter code: Meiosis-specific nuclear structural protein 1 (495 aa).

The interaction with BBOF1 stretch occupies residues 1–314 (MGSKRRNLSC…KLEEMLRQRE (314 aa)). Positions 28–410 (VQALKNVNSQ…QLEHRRAVEK (383 aa)) form a coiled coil. A Phosphotyrosine modification is found at Tyr188.

This sequence belongs to the MNS1 family. In terms of assembly, able to form oligomers. Microtubule inner protein component of sperm flagellar doublet microtubules. Interacts with ODAD1. Interacts with BBOF1. In terms of tissue distribution, expressed in nasal respiratory epithelium and in the sperm.

The protein resides in the nucleus. Its subcellular location is the cytoplasm. The protein localises to the cytoskeleton. It is found in the cilium axoneme. It localises to the flagellum axoneme. Microtubule inner protein (MIP) part of the dynein-decorated doublet microtubules (DMTs) in cilia axoneme, which is required for motile cilia beating. May play a role in the control of meiotic division and germ cell differentiation through regulation of pairing and recombination during meiosis. Required for sperm flagella assembly. May play a role in the assembly and function of the outer dynein arm-docking complex (ODA-DC). ODA-DC mediates outer dynein arms (ODA) binding onto the axonemal doublet microtubules. The polypeptide is Meiosis-specific nuclear structural protein 1 (Homo sapiens (Human)).